The chain runs to 1004 residues: Importin subunit beta-5 (1004 aa).

Met-1 is modified (N-acetylmethionine). The 80-residue stretch at 21–100 (AETQLLQWCD…REVLLKLCLN (80 aa)) folds into the Importin N-terminal domain.

This sequence belongs to the importin beta family. As to quaternary structure, interacts with NAP1.

Its subcellular location is the cytoplasm. It localises to the nucleus. The protein localises to the nuclear pore complex. In terms of biological role, required for nuclear protein import and mediates docking of import substrate to distinct nucleoporins. Serves a receptor for nuclear localization signals. Mediates the nuclear import of TATA-binding protein (TBP) and of histones H2A and H2B. In Saccharomyces cerevisiae (strain ATCC 204508 / S288c) (Baker's yeast), this protein is Importin subunit beta-5 (KAP114).